The sequence spans 128 residues: Keratin-associated protein 2-1 (128 aa).

Residues 5–112 are 10 X 5 AA repeats of C-C-[CDPQRWG]-[APRS]-[CIPSTVD]; sequence CCGSTFSSLS…SVQSPCCRPP (108 aa).

This sequence belongs to the KRTAP type 2 family. Interacts with hair keratins.

In the hair cortex, hair keratin intermediate filaments are embedded in an interfilamentous matrix, consisting of hair keratin-associated proteins (KRTAP), which are essential for the formation of a rigid and resistant hair shaft through their extensive disulfide bond cross-linking with abundant cysteine residues of hair keratins. The matrix proteins include the high-sulfur and high-glycine-tyrosine keratins. This chain is Keratin-associated protein 2-1 (KRTAP2-1), found in Homo sapiens (Human).